Reading from the N-terminus, the 940-residue chain is Inter-alpha-trypsin inhibitor heavy chain H5 (940 aa).

Residues 1–16 (MLLLLGLCLGLSQCVG) form the signal peptide. One can recognise a VIT domain in the interval 35 to 161 (VPRQVRLLQR…KAAFFLSYEE (127 aa)). Residues Asn97 and Asn127 are each glycosylated (N-linked (GlcNAc...) asparagine). 2 disordered regions span residues 117–136 (KSGDRVKEKRNKTTEENGEK) and 208–227 (SRQRGSGRGEDDSGPPPSTV). N-linked (GlcNAc...) asparagine glycosylation occurs at Asn231. One can recognise a VWFA domain in the interval 295–478 (NVVFVLDSSA…SQLIGFYDEI (184 aa)). Residues 405-432 (DGWEAHGRGDAHPQDPQQHPRGRPRPSL) are disordered. Basic and acidic residues predominate over residues 407–417 (WEAHGRGDAHP). N-linked (GlcNAc...) asparagine glycosylation is present at Asn508. The segment at 541–571 (PKTDVPVGPQKAGKDVTGSPRPGGDGERNPN) is disordered. N-linked (GlcNAc...) asparagine glycosylation is found at Asn774, Asn793, and Asn860.

Belongs to the ITIH family.

Its subcellular location is the secreted. Functionally, may act as a tumor suppressor. The chain is Inter-alpha-trypsin inhibitor heavy chain H5 (ITIH5) from Pongo abelii (Sumatran orangutan).